Consider the following 344-residue polypeptide: MVRRLSEIAGLLGLELRGEDREVSGVNTLEAAGPDEISFLANPRYMGQLSTTRAGAVIVAAEHAQDVAVALVSANPYFDFGRTLALFARKQGSFEGVSEQAVVHPEAVVGEGCAVYPHVYIGPRARIGAGTVLFPGCYIGEDCVVGGGCTLYPNVVLMAGVEIGDDCILHAGVVLGADGFGFARTEFGIQKIPQVGTVRIGSDVEIGANTTIDRSVLGVTTVGDGTKIDNLVMLGHNVEMGRNCLIVSQVGISGSTKVGDDVTMAGQVGVAGHLSIGSGVTIGPKSGVAKDIPAGETVGGAPAVDKSTYMRTLTVMPKLPDMYKRLGKLEKELAELKKSLSEEQ.

H236 (proton acceptor) is an active-site residue.

The protein belongs to the transferase hexapeptide repeat family. LpxD subfamily. As to quaternary structure, homotrimer.

The catalysed reaction is a UDP-3-O-[(3R)-3-hydroxyacyl]-alpha-D-glucosamine + a (3R)-hydroxyacyl-[ACP] = a UDP-2-N,3-O-bis[(3R)-3-hydroxyacyl]-alpha-D-glucosamine + holo-[ACP] + H(+). It participates in bacterial outer membrane biogenesis; LPS lipid A biosynthesis. In terms of biological role, catalyzes the N-acylation of UDP-3-O-acylglucosamine using 3-hydroxyacyl-ACP as the acyl donor. Is involved in the biosynthesis of lipid A, a phosphorylated glycolipid that anchors the lipopolysaccharide to the outer membrane of the cell. This Nitratidesulfovibrio vulgaris (strain ATCC 29579 / DSM 644 / CCUG 34227 / NCIMB 8303 / VKM B-1760 / Hildenborough) (Desulfovibrio vulgaris) protein is UDP-3-O-acylglucosamine N-acyltransferase.